The following is a 946-amino-acid chain: ATP-dependent 6-phosphofructokinase subunit beta (946 aa).

The interval 1-559 (MISIVNGTST…HLANFMAMNT (559 aa)) is N-terminal catalytic PFK domain 1. Residues glycine 192, 256-257 (RC), and 286-289 (GDGS) contribute to the ATP site. Aspartate 287 contacts Mg(2+). Residues 332 to 334 (SID), arginine 369, 376 to 378 (MGR), glutamate 433, arginine 461, and 467 to 470 (HVQR) contribute to the beta-D-fructose 6-phosphate site. Aspartate 334 functions as the Proton acceptor in the catalytic mechanism. The interval 560–573 (ANHEKPTLPREKRK) is interdomain linker. The tract at residues 574–946 (KIAIINIGAP…LVGRTRLDKP (373 aa)) is C-terminal regulatory PFK domain 2. Beta-D-fructose 2,6-bisphosphate-binding positions include arginine 644, 702–706 (TISNN), 747–749 (QGG), lysine 833, 839–842 (HVQQ), and arginine 920.

Belongs to the phosphofructokinase type A (PFKA) family. ATP-dependent PFK group I subfamily. Eukaryotic two domain clade 'E' sub-subfamily. Heterooctamer of 4 alpha and 4 beta chains. Requires Mg(2+) as cofactor.

It is found in the cytoplasm. The catalysed reaction is beta-D-fructose 6-phosphate + ATP = beta-D-fructose 1,6-bisphosphate + ADP + H(+). Its pathway is carbohydrate degradation; glycolysis; D-glyceraldehyde 3-phosphate and glycerone phosphate from D-glucose: step 3/4. With respect to regulation, allosterically activated by ADP, AMP, or fructose 2,6-bisphosphate, and allosterically inhibited by ATP or citrate. Catalyzes the phosphorylation of D-fructose 6-phosphate to fructose 1,6-bisphosphate by ATP, the first committing step of glycolysis. This chain is ATP-dependent 6-phosphofructokinase subunit beta (PFK2), found in Candida albicans (Yeast).